Reading from the N-terminus, the 77-residue chain is Small ribosomal subunit protein uS17 (77 aa).

Belongs to the universal ribosomal protein uS17 family. In terms of assembly, part of the 30S ribosomal subunit.

One of the primary rRNA binding proteins, it binds specifically to the 5'-end of 16S ribosomal RNA. In Rickettsia canadensis (strain McKiel), this protein is Small ribosomal subunit protein uS17.